The following is a 278-amino-acid chain: Probable velvet family sexual development regulator SCHCODRAFT_28806 (278 aa).

Residues 51 to 255 (GRTIRASLDE…ARVGVRLSVR (205 aa)) form the Velvet domain. Residues 257 to 278 (TGKKATTKRRKRSDSFDEDDSS) form a disordered region.

Belongs to the velvet family.

It localises to the nucleus. In terms of biological role, velvet-domain-containing protein that probably acts as a positive regulator of sexual development. This chain is Probable velvet family sexual development regulator SCHCODRAFT_28806, found in Schizophyllum commune (strain H4-8 / FGSC 9210) (Split gill fungus).